Consider the following 337-residue polypeptide: MDFILLIILSGVFLPDIISLQPIVGQEPGVTLSDEEQYYADEENNTDGNSVALHKLEENEMDTPANEKTGNYYKDIKQYVFTTPNIKGSEVSVTATTNLEFAVKKNYKASKPTASGEEEKPSESSRKTSTPNIPAFWTILSKAVNETAVSMDDKDQFFQPIPASDLNATNEDKLSELEEIKLKLMLGISLMTLVLLIPLLIFCFATLYKLRHLRDKSYESQYSINPELATLSYFHPTEGVSDTSFSKSADSNSYWVHNSSEMRRSRTRRSKSKPMDFSAGSNQTVLTDESSFLPPEETRFLLPEEPGKELIVERGPMQAMNEIDAQLLLNKEGSPSN.

An N-terminal signal peptide occupies residues M1–L20. The Lumenal portion of the chain corresponds to Q21 to K183. Residues S110–T130 are disordered. Residues E117–R126 show a composition bias toward basic and acidic residues. Residue N145 is glycosylated (N-linked (GlcNAc...) asparagine). The helical transmembrane segment at L184–F204 threads the bilayer. The Cytoplasmic portion of the chain corresponds to A205–N337. The interval S259–Q283 is disordered. Residue S336 is modified to Phosphoserine.

As to quaternary structure, interacts with SNAP25. In terms of processing, highly N- and O-glycosylated; contains sialic acid. MN9 epitope is O-glycosylated. As to expression, sperm specific, including germ cells (at protein level).

The protein localises to the cytoplasmic vesicle. It localises to the secretory vesicle. The protein resides in the acrosome membrane. Its subcellular location is the acrosome inner membrane. It is found in the acrosome outer membrane. The protein localises to the nucleus. It localises to the cytoplasm. Acrosomal membrane-anchored protein involved in the process of fertilization and in acrosome biogenesis. The polypeptide is Equatorin (Eqtn) (Mus musculus (Mouse)).